Reading from the N-terminus, the 291-residue chain is Glycine--tRNA ligase alpha subunit (291 aa).

The protein belongs to the class-II aminoacyl-tRNA synthetase family. In terms of assembly, tetramer of two alpha and two beta subunits.

It localises to the cytoplasm. The enzyme catalyses tRNA(Gly) + glycine + ATP = glycyl-tRNA(Gly) + AMP + diphosphate. This Nitratidesulfovibrio vulgaris (strain DSM 19637 / Miyazaki F) (Desulfovibrio vulgaris) protein is Glycine--tRNA ligase alpha subunit.